The sequence spans 234 residues: Ribonuclease HII (234 aa).

Residues 47 to 234 (IRIAGVDEVG…KTVHKILYQE (188 aa)) enclose the RNase H type-2 domain. Residues D53, E54, and D144 each contribute to the a divalent metal cation site.

The protein belongs to the RNase HII family. The cofactor is Mn(2+). Requires Mg(2+) as cofactor.

It is found in the cytoplasm. The enzyme catalyses Endonucleolytic cleavage to 5'-phosphomonoester.. In terms of biological role, endonuclease that specifically degrades the RNA of RNA-DNA hybrids. This chain is Ribonuclease HII, found in Ruegeria pomeroyi (strain ATCC 700808 / DSM 15171 / DSS-3) (Silicibacter pomeroyi).